The following is a 759-amino-acid chain: Hormone-sensitive lipase (759 aa).

Residues 349–351 (HGG) carry the Involved in the stabilization of the negatively charged intermediate by the formation of the oxyanion hole motif. The active site involves Ser-423. The segment at 534–553 (GRKPQKTTSPTAESVRPTES) is disordered. Ser-557 is subject to Phosphoserine. Ser-559 carries the phosphoserine; by AMPK modification. Thr-574 is modified (phosphothreonine). The tract at residues 583 to 604 (LSNSEPSDSPEMSQSMETLGPS) is disordered. A compositionally biased stretch (polar residues) spans 585–604 (NSEPSDSPEMSQSMETLGPS). A phosphoserine mark is found at Ser-597, Ser-618, Ser-650, and Ser-651. Catalysis depends on residues Asp-694 and His-724.

It belongs to the 'GDXG' lipolytic enzyme family. As to quaternary structure, monomer and homodimer. Interacts with CAVIN1 in the adipocyte cytoplasm. Interacts with PLIN5. Post-translationally, phosphorylation by AMPK reduces its translocation towards the lipid droplets.

It is found in the cell membrane. The protein localises to the membrane. Its subcellular location is the caveola. The protein resides in the cytoplasm. It localises to the cytosol. It is found in the lipid droplet. It catalyses the reaction a diacylglycerol + H2O = a monoacylglycerol + a fatty acid + H(+). The enzyme catalyses a triacylglycerol + H2O = a diacylglycerol + a fatty acid + H(+). The catalysed reaction is a monoacylglycerol + H2O = glycerol + a fatty acid + H(+). It carries out the reaction Hydrolyzes glycerol monoesters of long-chain fatty acids.. It catalyses the reaction cholesteryl (9Z-octadecenoate) + H2O = cholesterol + (9Z)-octadecenoate + H(+). The enzyme catalyses all-trans-retinyl hexadecanoate + H2O = all-trans-retinol + hexadecanoate + H(+). The catalysed reaction is 1,2-di-(9Z-octadecenoyl)-glycerol + H2O = (9Z-octadecenoyl)-glycerol + (9Z)-octadecenoate + H(+). It carries out the reaction 2-(5Z,8Z,11Z,14Z-eicosatetraenoyl)-glycerol + H2O = glycerol + (5Z,8Z,11Z,14Z)-eicosatetraenoate + H(+). It catalyses the reaction 1-(9Z-octadecenoyl)-glycerol + H2O = glycerol + (9Z)-octadecenoate + H(+). The enzyme catalyses 2-(9Z-octadecenoyl)-glycerol + H2O = glycerol + (9Z)-octadecenoate + H(+). The catalysed reaction is 1-O-hexadecyl-2-acetyl-sn-glycerol + H2O = 1-O-hexadecyl-sn-glycerol + acetate + H(+). It carries out the reaction 1,2-di-(9Z-octadecenoyl)-sn-glycerol + H2O = (9Z-octadecenoyl)-glycerol + (9Z)-octadecenoate + H(+). It catalyses the reaction 1,3-di-(9Z-octadecenoyl)-glycerol + H2O = 1-(9Z-octadecenoyl)-glycerol + (9Z)-octadecenoate + H(+). The enzyme catalyses 1,2-di-(9Z-octadecenoyl)-glycerol + (9Z)-octadecenoate + H(+) = 1,2,3-tri-(9Z-octadecenoyl)-glycerol + H2O. The catalysed reaction is 2,3-di-(9Z)-octadecenoyl-sn-glycerol + H2O = 2-(9Z-octadecenoyl)-glycerol + (9Z)-octadecenoate + H(+). It carries out the reaction 1,2,3-tri-(9Z-octadecenoyl)-glycerol + H2O = di-(9Z)-octadecenoylglycerol + (9Z)-octadecenoate + H(+). It catalyses the reaction 1,2-di-(9Z-octadecenoyl)-glycerol + H2O = 2-(9Z-octadecenoyl)-glycerol + (9Z)-octadecenoate + H(+). It functions in the pathway glycerolipid metabolism; triacylglycerol degradation. In terms of biological role, lipase with broad substrate specificity, catalyzing the hydrolysis of triacylglycerols (TAGs), diacylglycerols (DAGs), monoacylglycerols (MAGs), cholesteryl esters and retinyl esters. Shows a preferential hydrolysis of DAGs over TAGs and MAGs and of the fatty acid (FA) esters at the sn-1 and sn-2 positions of the glycerol backbone in TAGs. Preferentially hydrolyzes FA esters at the sn-3 position of the glycerol backbone in DAGs. Catalyzes the hydrolysis of 2-arachidonoylglycerol, an endocannabinoid and of 2-acetyl monoalkylglycerol ether, the penultimate precursor of the pathway for de novo synthesis of platelet-activating factor. In adipose tissue and heart, it primarily hydrolyzes stored triglycerides to free fatty acids, while in steroidogenic tissues, it principally converts cholesteryl esters to free cholesterol for steroid hormone production. The polypeptide is Hormone-sensitive lipase (Lipe) (Mus musculus (Mouse)).